We begin with the raw amino-acid sequence, 67 residues long: Phycobilisome 7.8 kDa linker polypeptide, allophycocyanin-associated, core (67 aa).

The CpcD-like domain occupies 1–56; sequence MRMFKITACVPSQTRIRTQRELQNTYFTKLVPYENWFREQQRIQKMGGKIVKVELF.

It belongs to the phycobilisome linker protein family.

The protein resides in the cellular thylakoid membrane. Its function is as follows. Rod linker protein, associated with allophycocyanin. Linker polypeptides determine the state of aggregation and the location of the disk-shaped phycobiliprotein units within the phycobilisome and modulate their spectroscopic properties in order to mediate a directed and optimal energy transfer. In Thermosynechococcus vestitus (strain NIES-2133 / IAM M-273 / BP-1), this protein is Phycobilisome 7.8 kDa linker polypeptide, allophycocyanin-associated, core (apcC).